A 275-amino-acid chain; its full sequence is NH(3)-dependent NAD(+) synthetase (275 aa).

46-53 contributes to the ATP binding site; it reads GISGGQDS. A Mg(2+)-binding site is contributed by Asp52. Arg140 serves as a coordination point for deamido-NAD(+). Position 160 (Thr160) interacts with ATP. Position 165 (Glu165) interacts with Mg(2+). The deamido-NAD(+) site is built by Lys173 and Asp180. Residues Lys189 and Thr211 each contribute to the ATP site. 260–261 serves as a coordination point for deamido-NAD(+); the sequence is HK.

This sequence belongs to the NAD synthetase family. As to quaternary structure, homodimer.

The enzyme catalyses deamido-NAD(+) + NH4(+) + ATP = AMP + diphosphate + NAD(+) + H(+). Its pathway is cofactor biosynthesis; NAD(+) biosynthesis; NAD(+) from deamido-NAD(+) (ammonia route): step 1/1. Catalyzes the ATP-dependent amidation of deamido-NAD to form NAD. Uses ammonia as a nitrogen source. The protein is NH(3)-dependent NAD(+) synthetase of Shigella boydii serotype 4 (strain Sb227).